The following is a 129-amino-acid chain: Small ribosomal subunit protein uS11c (129 aa).

It belongs to the universal ribosomal protein uS11 family. As to quaternary structure, part of the 30S ribosomal subunit.

The protein resides in the plastid. Its subcellular location is the chloroplast. The protein is Small ribosomal subunit protein uS11c of Pleurastrum terricola (Filamentous green alga).